A 33-amino-acid chain; its full sequence is Photosystem II reaction center protein Psb30 (33 aa).

Residues 5-25 traverse the membrane as a helical segment; it reads VIAQPIVLGLIVASGPLVIVS.

Belongs to the Psb30/Ycf12 family. As to quaternary structure, PSII is composed of 1 copy each of membrane proteins PsbA, PsbB, PsbC, PsbD, PsbE, PsbF, PsbH, PsbI, PsbJ, PsbK, PsbL, PsbM, PsbT, PsbX, PsbY, PsbZ, Psb30/Ycf12, peripheral proteins of the oxygen-evolving complex and a large number of cofactors. It forms dimeric complexes.

Its subcellular location is the plastid membrane. Functionally, a core subunit of photosystem II (PSII), probably helps stabilize the reaction center. This Aneura mirabilis (Parasitic liverwort) protein is Photosystem II reaction center protein Psb30.